Here is a 660-residue protein sequence, read N- to C-terminus: Bifunctional polymyxin resistance protein ArnA (660 aa).

The formyltransferase ArnAFT stretch occupies residues 1–304 (MKAVIFAYHD…TLGLVAGARL (304 aa)). Catalysis depends on His104, which acts as the Proton donor; for formyltransferase activity. Residues Arg114 and 136–140 (VKRAD) contribute to the (6R)-10-formyltetrahydrofolate site. Residues 314-660 (RRIRVLILGV…RSVDVAERAS (347 aa)) are dehydrogenase ArnADH. NAD(+) contacts are provided by residues Asp347 and 368 to 369 (DI). Residues Ala393, Tyr398, and 432–433 (TS) contribute to the UDP-alpha-D-glucuronate site. The active-site Proton acceptor; for decarboxylase activity is Glu434. Residues Arg460, Asn492, 526-535 (KLIDGGQQKR), and Tyr613 each bind UDP-alpha-D-glucuronate. Arg619 acts as the Proton donor; for decarboxylase activity in catalysis.

In the N-terminal section; belongs to the Fmt family. UDP-L-Ara4N formyltransferase subfamily. The protein in the C-terminal section; belongs to the NAD(P)-dependent epimerase/dehydratase family. UDP-glucuronic acid decarboxylase subfamily. As to quaternary structure, homohexamer, formed by a dimer of trimers.

The enzyme catalyses UDP-alpha-D-glucuronate + NAD(+) = UDP-beta-L-threo-pentopyranos-4-ulose + CO2 + NADH. It carries out the reaction UDP-4-amino-4-deoxy-beta-L-arabinose + (6R)-10-formyltetrahydrofolate = UDP-4-deoxy-4-formamido-beta-L-arabinose + (6S)-5,6,7,8-tetrahydrofolate + H(+). It participates in nucleotide-sugar biosynthesis; UDP-4-deoxy-4-formamido-beta-L-arabinose biosynthesis; UDP-4-deoxy-4-formamido-beta-L-arabinose from UDP-alpha-D-glucuronate: step 1/3. Its pathway is nucleotide-sugar biosynthesis; UDP-4-deoxy-4-formamido-beta-L-arabinose biosynthesis; UDP-4-deoxy-4-formamido-beta-L-arabinose from UDP-alpha-D-glucuronate: step 3/3. The protein operates within bacterial outer membrane biogenesis; lipopolysaccharide biosynthesis. Bifunctional enzyme that catalyzes the oxidative decarboxylation of UDP-glucuronic acid (UDP-GlcUA) to UDP-4-keto-arabinose (UDP-Ara4O) and the addition of a formyl group to UDP-4-amino-4-deoxy-L-arabinose (UDP-L-Ara4N) to form UDP-L-4-formamido-arabinose (UDP-L-Ara4FN). The modified arabinose is attached to lipid A and is required for resistance to polymyxin and cationic antimicrobial peptides. This Salmonella enteritidis PT4 (strain P125109) protein is Bifunctional polymyxin resistance protein ArnA.